A 130-amino-acid chain; its full sequence is Anti-adapter protein IraD (130 aa).

It belongs to the GpW/Gp25 family. IraD subfamily. Interacts with RssB.

It localises to the cytoplasm. Inhibits RpoS proteolysis by regulating RssB activity, thereby increasing the stability of the sigma stress factor RpoS during oxidative stress. Its effect on RpoS stability is due to its interaction with RssB, which probably blocks the interaction of RssB with RpoS, and the consequent delivery of the RssB-RpoS complex to the ClpXP protein degradation pathway. The protein is Anti-adapter protein IraD of Escherichia coli O45:K1 (strain S88 / ExPEC).